Reading from the N-terminus, the 142-residue chain is Large ribosomal subunit protein uL13 (142 aa).

This sequence belongs to the universal ribosomal protein uL13 family. As to quaternary structure, part of the 50S ribosomal subunit.

Its function is as follows. This protein is one of the early assembly proteins of the 50S ribosomal subunit, although it is not seen to bind rRNA by itself. It is important during the early stages of 50S assembly. The chain is Large ribosomal subunit protein uL13 from Pseudomonas syringae pv. tomato (strain ATCC BAA-871 / DC3000).